A 252-amino-acid chain; its full sequence is Imidazole glycerol phosphate synthase subunit HisF (252 aa).

Active-site residues include Asp12 and Asp131.

This sequence belongs to the HisA/HisF family. In terms of assembly, heterodimer of HisH and HisF.

Its subcellular location is the cytoplasm. The enzyme catalyses 5-[(5-phospho-1-deoxy-D-ribulos-1-ylimino)methylamino]-1-(5-phospho-beta-D-ribosyl)imidazole-4-carboxamide + L-glutamine = D-erythro-1-(imidazol-4-yl)glycerol 3-phosphate + 5-amino-1-(5-phospho-beta-D-ribosyl)imidazole-4-carboxamide + L-glutamate + H(+). Its pathway is amino-acid biosynthesis; L-histidine biosynthesis; L-histidine from 5-phospho-alpha-D-ribose 1-diphosphate: step 5/9. Its function is as follows. IGPS catalyzes the conversion of PRFAR and glutamine to IGP, AICAR and glutamate. The HisF subunit catalyzes the cyclization activity that produces IGP and AICAR from PRFAR using the ammonia provided by the HisH subunit. The sequence is that of Imidazole glycerol phosphate synthase subunit HisF from Thermus thermophilus (strain ATCC 27634 / DSM 579 / HB8).